A 359-amino-acid chain; its full sequence is (2E,6E)-farnesyl diphosphate synthase (359 aa).

The interval 1–21 (MRGTDEKYGLPPQPDSDRMTR) is disordered. Lys-73, Arg-76, and His-105 together coordinate isopentenyl diphosphate. Residues Asp-112 and Asp-116 each coordinate Mg(2+). The DDXXD motif signature appears at 112 to 116 (DDLMD). Arg-121 lines the (2E)-geranyl diphosphate pocket. Isopentenyl diphosphate is bound at residue Arg-122. 3 residues coordinate (2E)-geranyl diphosphate: Lys-201, Thr-202, and Gln-239. Residues 242–246 (DDLLG) carry the DDXXD motif motif. Residues Lys-256 and Lys-266 each contribute to the (2E)-geranyl diphosphate site.

It belongs to the FPP/GGPP synthase family. Requires Mg(2+) as cofactor.

Its subcellular location is the cytoplasm. It catalyses the reaction isopentenyl diphosphate + (2E)-geranyl diphosphate = (2E,6E)-farnesyl diphosphate + diphosphate. It participates in isoprenoid biosynthesis; farnesyl diphosphate biosynthesis; farnesyl diphosphate from geranyl diphosphate and isopentenyl diphosphate. In terms of biological role, catalyzes the condensation of isopentenyl pyrophosphate (IPP) with geranyl diphosphate (GPP) to yield (2E,6E)-farnesyl diphosphate (E,E-FPP). May be used for squalene and possibly sterol biosynthesis. The sequence is that of (2E,6E)-farnesyl diphosphate synthase from Mycobacterium bovis (strain ATCC BAA-935 / AF2122/97).